A 227-amino-acid chain; its full sequence is MLCNLIHNIHKEGYIIIMISFLLSCIGFAISCSLGIIFLVASLLCIYFFRDPIRIVPEGDHLIISPADGIILNIEQVNSPIDNSTQVLCISIFLNVLNVHVNRIPVSGTIKATEYIPGRFISASLNKSSELNERQRIVIESNVNHHTIIVDQIAGLIARRIVCNAYEGQNVNSGERFGIIRFGSRVNIYLPLNIHISAFKGQTVIGGETILAYLEDYPHKQLTAKFI.

Serine 184 serves as the catalytic Schiff-base intermediate with substrate; via pyruvic acid. The residue at position 184 (serine 184) is a Pyruvic acid (Ser); by autocatalysis.

This sequence belongs to the phosphatidylserine decarboxylase family. PSD-A subfamily. In terms of assembly, heterodimer of a large membrane-associated beta subunit and a small pyruvoyl-containing alpha subunit. It depends on pyruvate as a cofactor. In terms of processing, is synthesized initially as an inactive proenzyme. Formation of the active enzyme involves a self-maturation process in which the active site pyruvoyl group is generated from an internal serine residue via an autocatalytic post-translational modification. Two non-identical subunits are generated from the proenzyme in this reaction, and the pyruvate is formed at the N-terminus of the alpha chain, which is derived from the carboxyl end of the proenzyme. The post-translation cleavage follows an unusual pathway, termed non-hydrolytic serinolysis, in which the side chain hydroxyl group of the serine supplies its oxygen atom to form the C-terminus of the beta chain, while the remainder of the serine residue undergoes an oxidative deamination to produce ammonia and the pyruvoyl prosthetic group on the alpha chain.

The protein localises to the cell membrane. It catalyses the reaction a 1,2-diacyl-sn-glycero-3-phospho-L-serine + H(+) = a 1,2-diacyl-sn-glycero-3-phosphoethanolamine + CO2. The protein operates within phospholipid metabolism; phosphatidylethanolamine biosynthesis; phosphatidylethanolamine from CDP-diacylglycerol: step 2/2. Catalyzes the formation of phosphatidylethanolamine (PtdEtn) from phosphatidylserine (PtdSer). The polypeptide is Phosphatidylserine decarboxylase proenzyme (Ehrlichia ruminantium (strain Welgevonden)).